The following is a 448-amino-acid chain: Adenylosuccinate synthetase 1 (448 aa).

GTP-binding positions include G22–K28 and G50–T52. The Proton acceptor role is filled by D23. Residues D23 and G50 each contribute to the Mg(2+) site. IMP is bound by residues D23–K26, N48–H51, T139, R153, Q234, T249, and R321. H51 serves as the catalytic Proton donor. S317–R323 contacts substrate. GTP is bound by residues R323, K349 to D351, and S431 to G433.

It belongs to the adenylosuccinate synthetase family. As to quaternary structure, homodimer. The cofactor is Mg(2+).

It is found in the cytoplasm. The catalysed reaction is IMP + L-aspartate + GTP = N(6)-(1,2-dicarboxyethyl)-AMP + GDP + phosphate + 2 H(+). It participates in purine metabolism; AMP biosynthesis via de novo pathway; AMP from IMP: step 1/2. In terms of biological role, plays an important role in the de novo pathway of purine nucleotide biosynthesis. Catalyzes the first committed step in the biosynthesis of AMP from IMP. The sequence is that of Adenylosuccinate synthetase 1 from Burkholderia lata (strain ATCC 17760 / DSM 23089 / LMG 22485 / NCIMB 9086 / R18194 / 383).